A 184-amino-acid chain; its full sequence is Photosystem I assembly protein Ycf4 (184 aa).

2 helical membrane-spanning segments follow: residues 21–43 (NYFW…VSSY) and 63–85 (GIVM…FTIF).

This sequence belongs to the Ycf4 family.

The protein resides in the plastid. It is found in the chloroplast thylakoid membrane. In terms of biological role, seems to be required for the assembly of the photosystem I complex. In Chaetosphaeridium globosum (Charophycean green alga), this protein is Photosystem I assembly protein Ycf4.